Consider the following 551-residue polypeptide: Palmdelphin (551 aa).

M1 carries the post-translational modification N-acetylmethionine. Positions E2–I106 form a coiled coil. K125 is covalently cross-linked (Glycyl lysine isopeptide (Lys-Gly) (interchain with G-Cter in SUMO2)). The residue at position 135 (S135) is a Phosphoserine. K179 is covalently cross-linked (Glycyl lysine isopeptide (Lys-Gly) (interchain with G-Cter in SUMO1); alternate). A Glycyl lysine isopeptide (Lys-Gly) (interchain with G-Cter in SUMO2); alternate cross-link involves residue K179. Residues S247–D259 are compositionally biased toward basic and acidic residues. Disordered regions lie at residues S247–E393 and E450–D529. Phosphothreonine is present on T271. Phosphoserine is present on residues S321, S370, S384, and S385. A compositionally biased stretch (basic and acidic residues) spans K484 to N495. 3 positions are modified to phosphoserine: S498, S515, and S520.

Belongs to the paralemmin family. As to quaternary structure, interacts with GLUL. Cell projection, dendrite. Cell projection, dendritic spine. Phosphorylated.

The protein resides in the cytoplasm. The protein localises to the cell projection. It localises to the dendrite. It is found in the dendritic spine. The polypeptide is Palmdelphin (PALMD) (Sus scrofa (Pig)).